A 154-amino-acid polypeptide reads, in one-letter code: Ascorbate-specific PTS system EIIA component (154 aa).

Residues Ser6–Thr150 form the PTS EIIA type-2 domain. His68 (tele-phosphohistidine intermediate) is an active-site residue. His68 is subject to Phosphohistidine.

It localises to the cytoplasm. Functionally, the phosphoenolpyruvate-dependent sugar phosphotransferase system (sugar PTS), a major carbohydrate active transport system, catalyzes the phosphorylation of incoming sugar substrates concomitantly with their translocation across the cell membrane. The enzyme II UlaABC PTS system is involved in ascorbate transport. This chain is Ascorbate-specific PTS system EIIA component (ulaC), found in Shigella boydii serotype 4 (strain Sb227).